The sequence spans 867 residues: Protein translocase subunit SecA 1 (867 aa).

ATP contacts are provided by residues Q86, 104 to 108, and D493; that span reads GEGKT.

It belongs to the SecA family. In terms of assembly, monomer and homodimer. Part of the essential Sec protein translocation apparatus which comprises SecA, SecYEG and auxiliary proteins SecDF. Other proteins may also be involved.

The protein localises to the cell membrane. Its subcellular location is the cytoplasm. It carries out the reaction ATP + H2O + cellular proteinSide 1 = ADP + phosphate + cellular proteinSide 2.. Functionally, part of the Sec protein translocase complex. Interacts with the SecYEG preprotein conducting channel. Has a central role in coupling the hydrolysis of ATP to the transfer of proteins into and across the cell membrane, serving as an ATP-driven molecular motor driving the stepwise translocation of polypeptide chains across the membrane. This is Protein translocase subunit SecA 1 from Corynebacterium jeikeium (strain K411).